Consider the following 337-residue polypeptide: Glyceraldehyde-3-phosphate dehydrogenase (337 aa).

NAD(+) is bound by residues Arg-12–Ile-13, Asp-34, and Arg-79. D-glyceraldehyde 3-phosphate contacts are provided by residues Ser-150 to Thr-152, Thr-181, Thr-210 to Gly-211, and Arg-233. Cys-151 (nucleophile) is an active-site residue. Asn-315 lines the NAD(+) pocket.

Belongs to the glyceraldehyde-3-phosphate dehydrogenase family. In terms of assembly, homotetramer.

The protein resides in the cytoplasm. The enzyme catalyses D-glyceraldehyde 3-phosphate + phosphate + NAD(+) = (2R)-3-phospho-glyceroyl phosphate + NADH + H(+). It functions in the pathway carbohydrate degradation; glycolysis; pyruvate from D-glyceraldehyde 3-phosphate: step 1/5. This is Glyceraldehyde-3-phosphate dehydrogenase (GPD) from Omphalotus olearius (Jack o'lantern).